The chain runs to 394 residues: Elongation factor Tu (394 aa).

The tr-type G domain occupies 10 to 204 (KEHVNVGTIG…AVDTYIENPV (195 aa)). Residues 19–26 (GHVDHGKT) are G1. GTP is bound at residue 19-26 (GHVDHGKT). Mg(2+) is bound at residue Thr26. Positions 60–64 (GITIN) are G2. Residues 81-84 (DCPG) form a G3 region. GTP contacts are provided by residues 81–85 (DCPGH) and 136–139 (NKCD). Residues 136-139 (NKCD) are G4. The tract at residues 174–176 (SAL) is G5.

This sequence belongs to the TRAFAC class translation factor GTPase superfamily. Classic translation factor GTPase family. EF-Tu/EF-1A subfamily. In terms of assembly, monomer.

The protein localises to the cytoplasm. The enzyme catalyses GTP + H2O = GDP + phosphate + H(+). Functionally, GTP hydrolase that promotes the GTP-dependent binding of aminoacyl-tRNA to the A-site of ribosomes during protein biosynthesis. The sequence is that of Elongation factor Tu from Mycoplasmopsis synoviae (strain 53) (Mycoplasma synoviae).